The chain runs to 144 residues: Large ribosomal subunit protein uL16 (144 aa).

The protein belongs to the universal ribosomal protein uL16 family. Part of the 50S ribosomal subunit.

Functionally, binds 23S rRNA and is also seen to make contacts with the A and possibly P site tRNAs. The polypeptide is Large ribosomal subunit protein uL16 (Erythrobacter litoralis (strain HTCC2594)).